We begin with the raw amino-acid sequence, 304 residues long: GTPase Era (304 aa).

Positions 7-178 (KCGVVAVLGA…KNALAALMPE (172 aa)) constitute an Era-type G domain. Residues 15–22 (GAPNAGKS) are G1. Residue 15–22 (GAPNAGKS) participates in GTP binding. Positions 41–45 (QTTRA) are G2. Positions 66 to 69 (DTPG) are G3. Residues 66–70 (DTPGI) and 128–131 (NKVD) each bind GTP. The tract at residues 128–131 (NKVD) is G4. Residues 157–159 (VSA) form a G5 region. The 78-residue stretch at 209 to 286 (LHEELPYDSA…HLFLHVKVDE (78 aa)) folds into the KH type-2 domain.

Belongs to the TRAFAC class TrmE-Era-EngA-EngB-Septin-like GTPase superfamily. Era GTPase family. As to quaternary structure, monomer.

Its subcellular location is the cytoplasm. The protein localises to the cell inner membrane. Its function is as follows. An essential GTPase that binds both GDP and GTP, with rapid nucleotide exchange. Plays a role in 16S rRNA processing and 30S ribosomal subunit biogenesis and possibly also in cell cycle regulation and energy metabolism. This is GTPase Era from Erythrobacter litoralis (strain HTCC2594).